Reading from the N-terminus, the 157-residue chain is CASP-like protein 1 (157 aa).

Over 1 to 13 (MKTEARDGGSEWR) the chain is Cytoplasmic. Residues 14–34 (WVAIFELFLRLAAIVSTSVAV) traverse the membrane as a helical segment. Over 35–40 (YAAMGK) the chain is Extracellular. A helical membrane pass occupies residues 41–61 (IFVVAVNGVACFYLLMSLPVS). At 62–82 (IFNIMRPHAYPANRVFLNIMD) the chain is on the cytoplasmic side. The chain crosses the membrane as a helical span at residues 83 to 103 (MVMVALVTAGALAAGIVYLVE). Topologically, residues 104–121 (KAGNARASWVSVWSQFDS) are extracellular. A helical membrane pass occupies residues 122–142 (SSCFAVLALILHVLLSGVILY). The Cytoplasmic portion of the chain corresponds to 143–157 (KQALNIKFKKLDSVD).

The protein belongs to the Casparian strip membrane proteins (CASP) family. As to quaternary structure, homodimer and heterodimers.

The protein localises to the cell membrane. The polypeptide is CASP-like protein 1 (Picea sitchensis (Sitka spruce)).